A 199-amino-acid polypeptide reads, in one-letter code: Chaperone protein TorD (199 aa).

Belongs to the TorD/DmsD family. TorD subfamily.

Its subcellular location is the cytoplasm. In terms of biological role, involved in the biogenesis of TorA. Acts on TorA before the insertion of the molybdenum cofactor and, as a result, probably favors a conformation of the apoenzyme that is competent for acquiring the cofactor. This chain is Chaperone protein TorD, found in Escherichia coli O157:H7 (strain EC4115 / EHEC).